The chain runs to 195 residues: Dephospho-CoA kinase (195 aa).

Positions 3–195 (KIGLTGGIGS…ANMKNVIAEI (193 aa)) constitute a DPCK domain. 11–16 (GSGKST) lines the ATP pocket.

It belongs to the CoaE family.

It localises to the cytoplasm. The catalysed reaction is 3'-dephospho-CoA + ATP = ADP + CoA + H(+). The protein operates within cofactor biosynthesis; coenzyme A biosynthesis; CoA from (R)-pantothenate: step 5/5. In terms of biological role, catalyzes the phosphorylation of the 3'-hydroxyl group of dephosphocoenzyme A to form coenzyme A. This chain is Dephospho-CoA kinase, found in Corynebacterium glutamicum (Brevibacterium saccharolyticum).